The chain runs to 354 residues: Allantoicase (354 aa).

The protein belongs to the allantoicase family.

The enzyme catalyses allantoate + H2O = (S)-ureidoglycolate + urea. Its pathway is nitrogen metabolism; (S)-allantoin degradation; (S)-ureidoglycolate from allantoate (aminidohydrolase route): step 1/1. In terms of biological role, utilization of purines as secondary nitrogen sources, when primary sources are limiting. The sequence is that of Allantoicase (alc-1) from Neurospora crassa (strain ATCC 24698 / 74-OR23-1A / CBS 708.71 / DSM 1257 / FGSC 987).